A 236-amino-acid polypeptide reads, in one-letter code: 2-C-methyl-D-erythritol 4-phosphate cytidylyltransferase (236 aa).

The protein belongs to the IspD/TarI cytidylyltransferase family. IspD subfamily.

It carries out the reaction 2-C-methyl-D-erythritol 4-phosphate + CTP + H(+) = 4-CDP-2-C-methyl-D-erythritol + diphosphate. It functions in the pathway isoprenoid biosynthesis; isopentenyl diphosphate biosynthesis via DXP pathway; isopentenyl diphosphate from 1-deoxy-D-xylulose 5-phosphate: step 2/6. In terms of biological role, catalyzes the formation of 4-diphosphocytidyl-2-C-methyl-D-erythritol from CTP and 2-C-methyl-D-erythritol 4-phosphate (MEP). This Burkholderia thailandensis (strain ATCC 700388 / DSM 13276 / CCUG 48851 / CIP 106301 / E264) protein is 2-C-methyl-D-erythritol 4-phosphate cytidylyltransferase.